Here is a 148-residue protein sequence, read N- to C-terminus: 3-dehydroquinate dehydratase (148 aa).

Catalysis depends on Y26, which acts as the Proton acceptor. The substrate site is built by N77, H83, and D90. H103 functions as the Proton donor in the catalytic mechanism. Residues 104–105 and R114 contribute to the substrate site; that span reads LS.

Belongs to the type-II 3-dehydroquinase family. As to quaternary structure, homododecamer.

The enzyme catalyses 3-dehydroquinate = 3-dehydroshikimate + H2O. Its pathway is metabolic intermediate biosynthesis; chorismate biosynthesis; chorismate from D-erythrose 4-phosphate and phosphoenolpyruvate: step 3/7. Functionally, catalyzes a trans-dehydration via an enolate intermediate. This Pasteurella multocida (strain Pm70) protein is 3-dehydroquinate dehydratase (aroQ).